The following is a 490-amino-acid chain: Betaine aldehyde dehydrogenase (490 aa).

Residues T26, I27, and D93 each coordinate K(+). 150–152 is an NAD(+) binding site; that stretch reads GAW. K162 serves as the catalytic Charge relay system. An NAD(+)-binding site is contributed by 176 to 179; the sequence is KPSE. V180 lines the K(+) pocket. NAD(+) is bound at residue 230-233; that stretch reads GVAS. L246 lines the K(+) pocket. E252 functions as the Proton acceptor in the catalytic mechanism. NAD(+) is bound by residues G254, C286, and E387. The active-site Nucleophile is C286. Cysteine sulfenic acid (-SOH) is present on C286. The K(+) site is built by K457 and G460. Residue E464 is the Charge relay system of the active site.

This sequence belongs to the aldehyde dehydrogenase family. In terms of assembly, dimer of dimers. K(+) is required as a cofactor.

The enzyme catalyses betaine aldehyde + NAD(+) + H2O = glycine betaine + NADH + 2 H(+). The protein operates within amine and polyamine biosynthesis; betaine biosynthesis via choline pathway; betaine from betaine aldehyde: step 1/1. Its function is as follows. Involved in the biosynthesis of the osmoprotectant glycine betaine. Catalyzes the irreversible oxidation of betaine aldehyde to the corresponding acid. The sequence is that of Betaine aldehyde dehydrogenase from Escherichia coli O6:H1 (strain CFT073 / ATCC 700928 / UPEC).